Here is a 331-residue protein sequence, read N- to C-terminus: Ribosomal RNA small subunit methyltransferase C (331 aa).

This sequence belongs to the methyltransferase superfamily. RsmC family. As to quaternary structure, monomer.

It localises to the cytoplasm. The enzyme catalyses guanosine(1207) in 16S rRNA + S-adenosyl-L-methionine = N(2)-methylguanosine(1207) in 16S rRNA + S-adenosyl-L-homocysteine + H(+). Specifically methylates the guanine in position 1207 of 16S rRNA in the 30S particle. The polypeptide is Ribosomal RNA small subunit methyltransferase C (Pseudomonas putida (strain W619)).